Here is a 628-residue protein sequence, read N- to C-terminus: Choline transporter-like protein 2 (628 aa).

Topologically, residues 1 to 31 are cytoplasmic; it reads MSSEDLQDHHEIGNEVIKKKGVYTKKKCQDC. A helical membrane pass occupies residues 32-52; that stretch reads FFLILFLLFWAGMIVVAAFGV. Residues 53–204 are Extracellular-facing; that stretch reads KNGKPDRIVK…EILTDLTNSW (152 aa). Residues asparagine 82, asparagine 118, asparagine 146, and asparagine 168 are each glycosylated (N-linked (GlcNAc...) asparagine). A helical membrane pass occupies residues 205-225; the sequence is RYLIYGALIAMGLGLTWIFLL. Residue arginine 226 is a topological domain, cytoplasmic. A helical membrane pass occupies residues 227–247; sequence FFAGFITWLTVFAAYACLGLL. The Extracellular portion of the chain corresponds to 248–282; sequence TAQVYFQWQDSKDAYENTIPSQRLVMQEKNILALK. The chain crosses the membrane as a helical span at residues 283 to 303; sequence VIFIILCVVCGIFALILLALF. At 304–319 the chain is on the cytoplasmic side; sequence SRIRIAIRIIKECSRA. Residues 320 to 340 traverse the membrane as a helical segment; that stretch reads IGIMPSIFFFPIFIFLLLCGF. Topologically, residues 341–381 are extracellular; sequence TVYWVYIGVYLATAGSPTYDDQYRFTGYEADSKLQKIQIYH. The helical transmembrane segment at 382–402 threads the bilayer; sequence FFGYLWTFAFILALNQTTIAG. The Cytoplasmic segment spans residues 403–432; it reads AISSWYWVQDKKDTPFFPVWSSFFRVIRYH. Residues 433-453 form a helical membrane-spanning segment; it reads LGSIALGSLILAIVQFIRWVL. Topologically, residues 454–530 are extracellular; the sequence is RFLEKKFKGK…RVAAVNLVSS (77 aa). Residues 531–551 form a helical membrane-spanning segment; that stretch reads FLMFLGRVFITAATVGISLYL. Topologically, residues 552 to 559 are cytoplasmic; the sequence is LKEHENLS. The chain crosses the membrane as a helical span at residues 560–580; that stretch reads FYIIPVILIGFIAFAISTGFM. The Extracellular segment spans residues 581-628; that stretch reads SVYDMSIDTMLLCFCEDCERNDGSPERPYYMSKSLRKFVDGKGRSKCC.

The protein belongs to the CTL (choline transporter-like) family.

The protein resides in the cell membrane. Its subcellular location is the mitochondrion outer membrane. The enzyme catalyses choline(out) + n H(+)(in) = choline(in) + n H(+)(out). It carries out the reaction ethanolamine(out) + n H(+)(in) = ethanolamine(in) + n H(+)(out). Functionally, choline/H+ antiporter, mainly in mitochodria. Also acts as a low-affinity ethanolamine/H+ antiporter, regulating the supply of extracellular ethanolamine (Etn) for the CDP-Etn pathway, redistribute intracellular Etn and balance the CDP-Cho and CDP-Etn arms of the Kennedy pathway. The polypeptide is Choline transporter-like protein 2 (slc44a2) (Dictyostelium discoideum (Social amoeba)).